The following is a 1029-amino-acid chain: Multidrug resistance protein MdtC (1029 aa).

11 consecutive transmembrane segments (helical) span residues 15-35, 333-353, 360-380, 387-407, 431-451, 469-489, 528-548, 853-873, 897-917, 953-973, and 984-1004; these read ILLS…LPVA, EVEQ…FLFL, LIPA…MYLC, LSLM…IVAL, VGFT…PLLL, VAIG…CGWL, LVGL…ISIP, VILI…LYES, AFDA…IGIV, PIMM…IASG, and ITIV…TPVV.

The protein belongs to the resistance-nodulation-cell division (RND) (TC 2.A.6) family. MdtC subfamily. As to quaternary structure, part of a tripartite efflux system composed of MdtA, MdtB and MdtC. MdtC forms a heteromultimer with MdtB.

The protein localises to the cell inner membrane. This Cronobacter sakazakii (strain ATCC BAA-894) (Enterobacter sakazakii) protein is Multidrug resistance protein MdtC.